A 340-amino-acid chain; its full sequence is Phosphoribosylformylglycinamidine cyclo-ligase (340 aa).

Belongs to the AIR synthase family.

It localises to the cytoplasm. The enzyme catalyses 2-formamido-N(1)-(5-O-phospho-beta-D-ribosyl)acetamidine + ATP = 5-amino-1-(5-phospho-beta-D-ribosyl)imidazole + ADP + phosphate + H(+). It participates in purine metabolism; IMP biosynthesis via de novo pathway; 5-amino-1-(5-phospho-D-ribosyl)imidazole from N(2)-formyl-N(1)-(5-phospho-D-ribosyl)glycinamide: step 2/2. The sequence is that of Phosphoribosylformylglycinamidine cyclo-ligase from Streptococcus pyogenes serotype M6 (strain ATCC BAA-946 / MGAS10394).